Reading from the N-terminus, the 43-residue chain is Potassium channel toxin gamma-KTx 4.5 (43 aa).

Cystine bridges form between C5–C23, C11–C34, C20–C39, and C24–C41.

The protein belongs to the ergtoxin family. Gamma-KTx 4 subfamily. In terms of tissue distribution, expressed by the venom gland.

The protein localises to the secreted. Functionally, reversibly blocks Kv11/ERG potassium channels. The protein is Potassium channel toxin gamma-KTx 4.5 of Centruroides exilicauda (Bark scorpion).